We begin with the raw amino-acid sequence, 363 residues long: tRNA/tmRNA (uracil-C(5))-methyltransferase (363 aa).

Residues Gln187, Tyr215, Asn220, Glu236, and Asp296 each contribute to the S-adenosyl-L-methionine site. Cys321 functions as the Nucleophile in the catalytic mechanism. Glu355 acts as the Proton acceptor in catalysis.

Belongs to the class I-like SAM-binding methyltransferase superfamily. RNA M5U methyltransferase family. TrmA subfamily.

It carries out the reaction uridine(54) in tRNA + S-adenosyl-L-methionine = 5-methyluridine(54) in tRNA + S-adenosyl-L-homocysteine + H(+). The enzyme catalyses uridine(341) in tmRNA + S-adenosyl-L-methionine = 5-methyluridine(341) in tmRNA + S-adenosyl-L-homocysteine + H(+). Dual-specificity methyltransferase that catalyzes the formation of 5-methyluridine at position 54 (m5U54) in all tRNAs, and that of position 341 (m5U341) in tmRNA (transfer-mRNA). This Pseudomonas aeruginosa (strain LESB58) protein is tRNA/tmRNA (uracil-C(5))-methyltransferase.